A 418-amino-acid polypeptide reads, in one-letter code: Serum response factor homolog A (418 aa).

4 disordered regions span residues Leu-14 to Ala-67, Cys-144 to Gln-170, Arg-301 to Ser-351, and Ser-388 to Cys-418. Low complexity-rich tracts occupy residues Pro-22–Thr-39 and Thr-51–Glu-61. The MADS-box domain occupies Ala-67–Lys-127. Low complexity-rich tracts occupy residues Asn-150–Gln-170, Asn-306–Ser-351, and Ser-388–Pro-399. Residues Asn-400 to Cys-418 are compositionally biased toward polar residues.

The protein localises to the nucleus. Its function is as follows. Required for proper slug migration, spore differentiation and stalk differentiation (under nonbuffered conditions). Could be involved in late events of spore maturation necessary for spore stability. This chain is Serum response factor homolog A (srfA), found in Dictyostelium discoideum (Social amoeba).